The primary structure comprises 350 residues: Phosphotriesterase-related protein (350 aa).

His-22, His-24, Glu-169, His-201, His-230, and Asp-298 together coordinate a divalent metal cation.

The protein belongs to the metallo-dependent hydrolases superfamily. Phosphotriesterase family. A divalent metal cation serves as cofactor.

The sequence is that of Phosphotriesterase-related protein from Drosophila pseudoobscura pseudoobscura (Fruit fly).